The primary structure comprises 344 residues: Arginine N-succinyltransferase (344 aa).

Position 125 (L125) interacts with succinyl-CoA. Residue H229 is the Proton donor of the active site.

It belongs to the arginine N-succinyltransferase family.

The enzyme catalyses succinyl-CoA + L-arginine = N(2)-succinyl-L-arginine + CoA + H(+). The protein operates within amino-acid degradation; L-arginine degradation via AST pathway; L-glutamate and succinate from L-arginine: step 1/5. Its function is as follows. Catalyzes the transfer of succinyl-CoA to arginine to produce N(2)-succinylarginine. The protein is Arginine N-succinyltransferase of Escherichia coli O6:K15:H31 (strain 536 / UPEC).